Reading from the N-terminus, the 391-residue chain is Elongation factor Tu (391 aa).

Residues 10 to 201 enclose the tr-type G domain; sequence KPHVNIGTIG…AVDDYIPTPA (192 aa). The G1 stretch occupies residues 19–26; that stretch reads GHVDHGKT. 19–26 contacts GTP; sequence GHVDHGKT. Thr26 contacts Mg(2+). Residues 55 to 59 are G2; sequence GITIS. Residues 76 to 79 are G3; the sequence is DCPG. Residues 76-80 and 131-134 each bind GTP; these read DCPGH and NKVD. The interval 131–134 is G4; the sequence is NKVD. Positions 169–171 are G5; sequence SAL.

This sequence belongs to the TRAFAC class translation factor GTPase superfamily. Classic translation factor GTPase family. EF-Tu/EF-1A subfamily. In terms of assembly, monomer.

The protein resides in the cytoplasm. The catalysed reaction is GTP + H2O = GDP + phosphate + H(+). Functionally, GTP hydrolase that promotes the GTP-dependent binding of aminoacyl-tRNA to the A-site of ribosomes during protein biosynthesis. This chain is Elongation factor Tu, found in Dinoroseobacter shibae (strain DSM 16493 / NCIMB 14021 / DFL 12).